Reading from the N-terminus, the 553-residue chain is Glycerol kinase 2 (553 aa).

Substrate is bound at residue threonine 20. Arginine 24 is an ATP binding site. Substrate is bound by residues arginine 94, tyrosine 148, and aspartate 259. ATP-binding positions include threonine 281, glycine 326, and 427–431 (GMTNN). Residues 526-546 (IFSSMPLGFFIVSSMVMLIGA) traverse the membrane as a helical segment.

Belongs to the FGGY kinase family. As to quaternary structure, interacts with ARMC12 and PLD6.

It localises to the mitochondrion outer membrane. It is found in the cytoplasm. It catalyses the reaction glycerol + ATP = sn-glycerol 3-phosphate + ADP + H(+). It participates in polyol metabolism; glycerol degradation via glycerol kinase pathway; sn-glycerol 3-phosphate from glycerol: step 1/1. Functionally, key enzyme in the regulation of glycerol uptake and metabolism. Essential for male fertility and sperm mitochondrial sheath formation. Required for proper arrangement of crescent-like mitochondria to form the mitochondrial sheath during spermatogenesis. Can induce mitochondrial clustering through interactions with PLD6 and up-regulation of phosphatidic acid synthesis in the mitochondria. This is Glycerol kinase 2 (GK2) from Macaca fascicularis (Crab-eating macaque).